A 268-amino-acid polypeptide reads, in one-letter code: Putative hydro-lyase Arad_8587 (268 aa).

This sequence belongs to the D-glutamate cyclase family.

The chain is Putative hydro-lyase Arad_8587 from Rhizobium rhizogenes (strain K84 / ATCC BAA-868) (Agrobacterium radiobacter).